Consider the following 206-residue polypeptide: Regulatory protein CysR (206 aa).

The region spanning 120-196 (RRAEAKLASL…DRALIVRYPE (77 aa)) is the HTH crp-type domain. The segment at residues 156 to 175 (HQVIAELSGSTRVTTTRLLG) is a DNA-binding region (H-T-H motif).

The protein resides in the cytoplasm. Its function is as follows. Probably regulates the expression of genes from the sulfate permease complex. The chain is Regulatory protein CysR (cysR) from Synechococcus elongatus (strain ATCC 33912 / PCC 7942 / FACHB-805) (Anacystis nidulans R2).